The following is a 181-amino-acid chain: Mannose-specific lectin (181 aa).

The N-terminal stretch at 1-30 is a signal peptide; that stretch reads MGRTTSSPKAMMRIATVAAILTILASTCMA. The 110-residue stretch at 31-140 folds into the Bulb-type lectin domain; the sequence is RNVLTNGEGL…DIWSTGTYRR (110 aa). 20 residues coordinate alpha-D-mannopyranose: glutamine 56, aspartate 58, asparagine 60, tyrosine 64, tryptophan 71, alanine 72, asparagine 74, glutamine 88, aspartate 90, asparagine 92, tyrosine 96, valine 103, tryptophan 104, asparagine 107, asparagine 114, glutamine 120, aspartate 122, asparagine 124, tyrosine 128, and tryptophan 133. Cysteine 59 and cysteine 83 are joined by a disulfide.

Homodimer.

It localises to the secreted. Mannose-specific lectin. Shows agglutinating activity towards rabbit erythrocytes. However, it does not show agglutinating activity towards human erythrocytes. Has insecticidal activity against the cotton leafworm S.littoralis and the peach potato aphid M.persicae. Also displays antiviral activity and therefore may contribute to defense against infections. The protein is Mannose-specific lectin of Allium sativum (Garlic).